The primary structure comprises 1431 residues: Probable ATP-dependent RNA helicase spindle-E (1431 aa).

A Helicase ATP-binding domain is found at 127-294 (LAAIRENPVV…FAMSSSLPPV (168 aa)). 140–147 (GETGCGKT) contacts ATP. The DEAH box signature appears at 240–243 (DEVH). The Helicase C-terminal domain occupies 354–526 (QSQQSYEEAK…NSVLKAKELE (173 aa)). Residues 937–1000 (AKAVTKGLQL…RLMSPQLKRD (64 aa)) enclose the Tudor domain.

It belongs to the DEAD box helicase family. DEAH subfamily.

The protein resides in the cytoplasm. The catalysed reaction is ATP + H2O = ADP + phosphate + H(+). Its function is as follows. Probable ATP-binding RNA helicase which plays a central role during spermatogenesis and oogenesis by repressing transposable elements and preventing their mobilization, which is essential for the germline integrity. Acts via the piRNA metabolic process, which mediates the repression of transposable elements during meiosis by forming complexes composed of piRNAs and Piwi and govern the methylation and subsequent repression of transposons. Involved in the repression of LTR retrotransposon copia. Also involved in telomere regulation by repressing specialized telomeric retroelements HeT-A, TAHRE, and TART; Drosophila telomeres being maintained by transposition of specialized telomeric retroelements. Involved in telomeric trans-silencing, a repression mechanism by which a transposon or a transgene inserted in subtelomeric heterochromatin has the capacity to repress in trans in the female germline, a homologous transposon, or transgene located in euchromatin. Involved in the repression of testis-expressed Stellate genes by the homologous Su(Ste) repeats. Required for anteroposterior and dorsoventral axis formation during oogenesis. This chain is Probable ATP-dependent RNA helicase spindle-E (spn-E), found in Drosophila mojavensis (Fruit fly).